A 609-amino-acid chain; its full sequence is UvrABC system protein C (609 aa).

The GIY-YIG domain maps to 13 to 91 (HEPGVYRMYD…IKLYQPRYNV (79 aa)). In terms of domain architecture, UVR spans 201–236 (QQVLDYLIGKMEQASRNLDFEQAARYRDQIQAVRSV).

The protein belongs to the UvrC family. Interacts with UvrB in an incision complex.

It is found in the cytoplasm. The UvrABC repair system catalyzes the recognition and processing of DNA lesions. UvrC both incises the 5' and 3' sides of the lesion. The N-terminal half is responsible for the 3' incision and the C-terminal half is responsible for the 5' incision. The chain is UvrABC system protein C from Haemophilus influenzae (strain 86-028NP).